A 413-amino-acid polypeptide reads, in one-letter code: Serine protease inhibitor A3L (413 aa).

The first 28 residues, 1 to 28, serve as a signal peptide directing secretion; the sequence is MAFIAALGLLMAGICPAVLCDGTLGRDT. The residue at position 30 (Ser-30) is a Phosphoserine. Residues Asn-102, Asn-182, Asn-220, and Asn-267 are each glycosylated (N-linked (GlcNAc...) asparagine). The tract at residues 365 to 389 is RCL; it reads GTEATAATGVATVIRRQPRTLNFNR.

This sequence belongs to the serpin family. N-glycosylated. In terms of tissue distribution, liver.

Its subcellular location is the secreted. The polypeptide is Serine protease inhibitor A3L (Serpina3l) (Rattus norvegicus (Rat)).